Here is a 456-residue protein sequence, read N- to C-terminus: Cyclic AMP-responsive element-binding protein 3-like protein 3 (456 aa).

Disordered regions lie at residues 1 to 20 and 47 to 120; these read MDGDLAIGKMASSTSPMGPI and GHGE…KGPC. Residues 1 to 317 lie on the Cytoplasmic side of the membrane; that stretch reads MDGDLAIGKM…STSKSAQTGT (317 aa). The span at 71 to 85 shows a compositional bias: polar residues; that stretch reads DSDSPTWSPAASDSG. One can recognise a bZIP domain in the interval 238-301; the sequence is MLKKIRRKIR…LSLLEQLKKL (64 aa). The basic motif stretch occupies residues 240–269; that stretch reads KKIRRKIRNKQSAQESRKKKKEYIDGLETR. Positions 280 to 301 are leucine-zipper; sequence LQRKVLHLEKQNLSLLEQLKKL. Lys-289 participates in a covalent cross-link: Glycyl lysine isopeptide (Lys-Gly) (interchain with G-Cter in ubiquitin). The chain crosses the membrane as a helical; Signal-anchor for type II membrane protein span at residues 318-338; it reads CIAVLLFSFALIVLPSISPFA. Residues 339–456 lie on the Lumenal side of the membrane; that stretch reads SNRAESPGDF…VGLEAAGGEL (118 aa). Disordered stretches follow at residues 365 to 423 and 435 to 456; these read RVAP…QGNS and CAPPEPAVSPGHVGLEAAGGEL. N-linked (GlcNAc...) asparagine glycans are attached at residues Asn-408 and Asn-415.

Belongs to the bZIP family. ATF subfamily. Binds DNA as a dimer. May form homodimers. Interacts with ATF6. Interacts with SYNV1/HRD1; this interaction leads to CREB3L3 ubiquitination and proteasomal degradation. In terms of processing, controlled by regulated intramembrane proteolysis (RIP). Following ER stress a fragment containing the cytoplasmic transcription factor domain is released by proteolysis. The cleavage seems to be performed sequentially by site-1 and site-2 proteases (PS1 and PS2). N-glycosylation is required for optimal proteolytic activation. Post-translationally, ubiquitinated at Lys-289 by SYNV1/HRD1 via 'Lys-27'-linked ubiquitin.

The protein localises to the endoplasmic reticulum membrane. Its subcellular location is the nucleus. Transcription factor that may act during endoplasmic reticulum stress by activating unfolded protein response target genes. Activated in response to cAMP stimulation. In vitro, binds the cAMP response element (CRE). Activates transcription through box-B element and CRE. Seems to function synergistically with ATF6. In acute inflammatory response, may activate expression of acute phase response (APR) genes. May be involved in growth suppression. Regulates FGF21 transcription. Plays a crucial role in the regulation of triglyceride metabolism and is required for the maintenance of normal plasma triglyceride concentrations. The protein is Cyclic AMP-responsive element-binding protein 3-like protein 3 (CREB3L3) of Bos taurus (Bovine).